We begin with the raw amino-acid sequence, 417 residues long: MNFNIIIKIICENIQLAPIINMVSYKELFNINDTDLIVPSDTLSEAVYDNSKLDYIFQNVNRRNRDEVEDESINIQTQLPKQQNQQISKDMSEVGSKQVSEIRPDSDSRWKLLRVMAGAHQGWVRSCTVDPVTNKWFVTGSSDSTIKIWDLASSNLKATITGHIMGVRSLAVSSRYPYLFSGSEDKTVKCWDLERTNSSSGCQIRNYHGHVGGIYAMALHPELDLLFTGGRDSVIRVWDLRSRTEIMVLSGHRSDITSIASQIGDPQIITSSMDATIRLWDIRKATTQLALTHHSKSIRSMAMHPQEMTMCSGDTSGNLKEWLLPGGELLNEFGHSGENKIINTLSINPSNNTLFSGYDDGRMEFYDYVSGDLLQSDATTPVTGSTESAIYASTFDMSGLRLITCEGDKSIKIWGEE.

WD repeat units follow at residues 119–159 (AHQG…LKAT), 162–201 (GHIMGVRSLAVSSRYPYLFSGSEDKTVKCWDLERTNSSSG), 209–248 (GHVGGIYAMALHPELDLLFTGGRDSVIRVWDLRSRTEIMV), 251–290 (GHRSDITSIASQIGDPQIITSSMDATIRLWDIRKATTQLA), 293–334 (HHSK…NEFG), 337–376 (GENKIINTLSINPSNNTLFSGYDDGRMEFYDYVSGDLLQS), and 385–417 (STESAIYASTFDMSGLRLITCEGDKSIKIWGEE).

Belongs to the WD repeat PRL1/PRL2 family. In terms of assembly, associated with the spliceosome.

The protein localises to the cytoplasm. Its subcellular location is the nucleus. Functionally, involved in pre-mRNA splicing and required for cell cycle progression at G2/M. This Debaryomyces hansenii (strain ATCC 36239 / CBS 767 / BCRC 21394 / JCM 1990 / NBRC 0083 / IGC 2968) (Yeast) protein is Pre-mRNA-splicing factor PRP46 (PRP46).